A 913-amino-acid chain; its full sequence is DNA mismatch repair protein MutS (913 aa).

Position 720–727 (720–727 (GPNASGKS)) interacts with ATP.

The protein belongs to the DNA mismatch repair MutS family.

Functionally, this protein is involved in the repair of mismatches in DNA. It is possible that it carries out the mismatch recognition step. This protein has a weak ATPase activity. This Prochlorococcus marinus (strain MIT 9312) protein is DNA mismatch repair protein MutS.